Here is a 606-residue protein sequence, read N- to C-terminus: Threonine--tRNA ligase (606 aa).

Residues 212 to 503 (DHRKLGVEMK…LIEHTAGELP (292 aa)) are catalytic. Residues Cys304, His355, and His480 each coordinate Zn(2+).

The protein belongs to the class-II aminoacyl-tRNA synthetase family. In terms of assembly, homodimer. It depends on Zn(2+) as a cofactor.

It is found in the cytoplasm. It catalyses the reaction tRNA(Thr) + L-threonine + ATP = L-threonyl-tRNA(Thr) + AMP + diphosphate + H(+). Its function is as follows. Catalyzes the attachment of threonine to tRNA(Thr) in a two-step reaction: L-threonine is first activated by ATP to form Thr-AMP and then transferred to the acceptor end of tRNA(Thr). Also edits incorrectly charged L-seryl-tRNA(Thr). This is Threonine--tRNA ligase from Campylobacter curvus (strain 525.92).